Here is a 535-residue protein sequence, read N- to C-terminus: Alkaline phosphatase, placental type (535 aa).

The first 22 residues, 1–22, serve as a signal peptide directing secretion; it reads MLGPCMLLLLLLLGLRLQLSLG. Asp64 is a Mg(2+) binding site. Positions 64 and 114 each coordinate Zn(2+). Ser114 acts as the Phosphoserine intermediate in catalysis. The cysteines at positions 143 and 205 are disulfide-linked. The N-linked (GlcNAc...) asparagine glycan is linked to Asn144. A Mg(2+)-binding site is contributed by Ser177. Residue Glu238 participates in Ca(2+) binding. An N-linked (GlcNAc...) asparagine glycan is attached at Asn271. Phe291, Glu292, and Asp307 together coordinate Ca(2+). Glu333 is a binding site for Mg(2+). The Zn(2+) site is built by Asp338, His342, Asp379, and His380. The segment at 425–449 is disordered; the sequence is DGARPDVTESESGSPEYRQQSAVPL. Residues 434–446 are compositionally biased toward polar residues; it reads SESGSPEYRQQSA. His454 provides a ligand contact to Zn(2+). The cysteines at positions 489 and 496 are disulfide-linked. Asp506 carries GPI-anchor amidated aspartate lipidation. Positions 507-535 are cleaved as a propeptide — removed in mature form; it reads AAHPGRSVVPALLPLLAGTLLLLETATAP. A helical membrane pass occupies residues 513 to 529; that stretch reads SVVPALLPLLAGTLLLL.

The protein belongs to the alkaline phosphatase family. In terms of assembly, homodimer. The cofactor is Mg(2+). Requires Zn(2+) as cofactor. Ca(2+) serves as cofactor. In terms of tissue distribution, detected in placenta (at protein level).

The protein localises to the cell membrane. The enzyme catalyses a phosphate monoester + H2O = an alcohol + phosphate. Its function is as follows. Alkaline phosphatase that can hydrolyze various phosphate compounds. The protein is Alkaline phosphatase, placental type of Homo sapiens (Human).